Consider the following 265-residue polypeptide: Type II pantothenate kinase (265 aa).

6 to 13 (DAGGTLIK) contacts ATP. Glu-70 functions as the Proton acceptor in the catalytic mechanism. ATP is bound by residues Thr-99, 121-125 (GGMIQ), Tyr-137, and Ser-225.

The protein belongs to the type II pantothenate kinase family. In terms of assembly, homodimer.

Its subcellular location is the cytoplasm. The enzyme catalyses (R)-pantothenate + ATP = (R)-4'-phosphopantothenate + ADP + H(+). It functions in the pathway cofactor biosynthesis; coenzyme A biosynthesis; CoA from (R)-pantothenate: step 1/5. Functionally, catalyzes the phosphorylation of pantothenate (Pan), the first step in CoA biosynthesis. The polypeptide is Type II pantothenate kinase (Staphylococcus epidermidis (strain ATCC 12228 / FDA PCI 1200)).